The sequence spans 488 residues: Peptidoglycan endopeptidase LytF (488 aa).

Positions 1–26 (MKKKLAAGLTASAIVGTTLVVTPAEA) are cleaved as a signal peptide. 2 LysM domains span residues 27 to 70 (ATIK…TLTI) and 92 to 135 (SVYT…KLKV). Disordered stretches follow at residues 70 to 93 (IPGS…GSSV), 137 to 176 (GTVS…TGTY), and 218 to 239 (KSSG…TSAT). 2 stretches are compositionally biased toward low complexity: residues 72–93 (GSKS…GSSV) and 140–172 (SSSS…SSSS). The LysM 3 domain maps to 174 to 217 (GTYKVQLGDSLWKIANKVNMSIAELKVLNNLKSDTIYVNQVLKT). One can recognise a LysM 4 domain in the interval 240-283 (TKYTVKSGDSLWKIANNYNLTVQQIRNINNLKSDVLYVGQVLKL). The interval 286–306 (KASSGSSSSSSSSSNASSGTT) is disordered. Residues 307 to 350 (TTYTVKSGDSLWVIAQKFNVTAQQIREKNNLKTDVLQVGQKLVI) form the LysM 5 domain. The region spanning 370-488 (SAKINTMISA…QRYLGAKRYF (119 aa)) is the NlpC/P60 domain. Cysteine 400 serves as the catalytic Nucleophile. Histidine 449 functions as the Proton acceptor in the catalytic mechanism. The active site involves asparagine 461.

The protein belongs to the peptidase C40 family.

It localises to the secreted. Its subcellular location is the cell wall. With respect to regulation, is inhibited in vitro by para-hydroxymercuribenzoate, a sulfydryl inhibitor. Functionally, cell wall hydrolase that cleaves gamma-D-glutamate-meso-diaminopimelate bonds in peptidoglycan. LytF is necessary and sufficient for vegetative daughter cell separation, and also seems to play a role in cell autolysis. This is Peptidoglycan endopeptidase LytF (lytF) from Bacillus subtilis (strain 168).